The chain runs to 1047 residues: Formin-like protein 3 (1047 aa).

Gly-2 carries the N-myristoyl glycine lipid modification. The 441-residue stretch at 22 to 462 (VPMPDPTELE…AAFQRHNNIE (441 aa)) folds into the GBD/FH3 domain. The tract at residues 520 to 561 (AVPVEAVAPPPPPPPPPPPPPPAPPLPSEVESIPIPPPPPPP) is disordered. Positions 527–546 (APPPPPPPPPPPPPPAPPLP) are enriched in pro residues. Residues 580–970 (IKKPIKTKFR…MREKLLAQEA (391 aa)) form the FH2 domain. The 38-residue stretch at 1000 to 1037 (DHRPVYEGKDGTIEDIITVLKSVPFTARTAKRGSRFFC) folds into the DAD domain.

The protein belongs to the formin homology family.

It is found in the cytoplasm. The protein localises to the cell membrane. Required for developmental angiogenesis, but not for vasculogenesis. The chain is Formin-like protein 3 (fmnl3) from Danio rerio (Zebrafish).